The chain runs to 165 residues: Transcriptional regulator MraZ (165 aa).

SpoVT-AbrB domains follow at residues 5 to 51 and 80 to 123; these read TYEG…GEEL and SAEL…NPER.

This sequence belongs to the MraZ family. As to quaternary structure, forms oligomers.

It is found in the cytoplasm. It localises to the nucleoid. The polypeptide is Transcriptional regulator MraZ (Hyphomonas neptunium (strain ATCC 15444)).